We begin with the raw amino-acid sequence, 307 residues long: MTARKDSDWRDMLPRVQGRMSFDAPMAPFTWFRVGGNAEALFRPADLDDLIAVLEVLPPQVPVTVVGVGSNLLVRDGGVPGMVIRLAGPFATIDVMGDTITAGAGALDLTVARTAEEAGLAGLEFLSGVPGTIGGALRMNAGAFGAEMKDVTVSAQALDRAGNLQILGPEELGFSYRRSAVPEGWIFLSASLKGRPGKPADIGARMAEIARVREESQPVKVRTGGSTFANPEGHSAWKLIDAAGCRGLVMGGAQVSEKHCNFLLNTGDATAADIEDLGEEVRRRVLETSGIDLHWEIRRIGIRRDAS.

One can recognise an FAD-binding PCMH-type domain in the interval 34–197; the sequence is VGGNAEALFR…LSASLKGRPG (164 aa). The active site involves Arg-177. Residue Ser-226 is the Proton donor of the active site. The active site involves Glu-296.

Belongs to the MurB family. FAD serves as cofactor.

It is found in the cytoplasm. It catalyses the reaction UDP-N-acetyl-alpha-D-muramate + NADP(+) = UDP-N-acetyl-3-O-(1-carboxyvinyl)-alpha-D-glucosamine + NADPH + H(+). Its pathway is cell wall biogenesis; peptidoglycan biosynthesis. Cell wall formation. The polypeptide is UDP-N-acetylenolpyruvoylglucosamine reductase (Paramagnetospirillum magneticum (strain ATCC 700264 / AMB-1) (Magnetospirillum magneticum)).